Consider the following 153-residue polypeptide: Mediator of RNA polymerase II transcription subunit 31 (153 aa).

Disordered stretches follow at residues 1 to 28 (MTLGAATANDPIDSTLASPSRDEQRRQA) and 125 to 153 (RDPENAAGQEQDEAGEQGEARETTGGQTA).

It belongs to the Mediator complex subunit 31 family. Component of the Mediator complex.

It localises to the nucleus. In terms of biological role, component of the Mediator complex, a coactivator involved in the regulated transcription of nearly all RNA polymerase II-dependent genes. Mediator functions as a bridge to convey information from gene-specific regulatory proteins to the basal RNA polymerase II transcription machinery. Mediator is recruited to promoters by direct interactions with regulatory proteins and serves as a scaffold for the assembly of a functional preinitiation complex with RNA polymerase II and the general transcription factors. The protein is Mediator of RNA polymerase II transcription subunit 31 (SOH1) of Mycosarcoma maydis (Corn smut fungus).